Reading from the N-terminus, the 109-residue chain is PMTKVLKADDINKAISAFKDPGTFDYKRFFHLVGLKGKTDAQVKEVFEILDKDQSGFIEEEELKGVLKGFSAHGRDLNDTETKALLAAGDSDHDGKIGADEFAKMVAQA.

2 consecutive EF-hand domains span residues 38-73 (KTDAQVKEVFEILDKDQSGFIEEEELKGVLKGFSAH) and 77-109 (LNDTETKALLAAGDSDHDGKIGADEFAKMVAQA). Ca(2+) is bound by residues Asp-51, Asp-53, Ser-55, Glu-62, Asp-90, Asp-92, Asp-94, Lys-96, and Glu-101.

The protein belongs to the parvalbumin family.

In muscle, parvalbumin is thought to be involved in relaxation after contraction. It binds two calcium ions. In Triakis semifasciata (Leopard shark), this protein is Parvalbumin alpha.